The primary structure comprises 491 residues: Ligand-gated ion channel 50 (491 aa).

The first 19 residues, 1 to 19 (MRFLLVLQLVFFYFSAATT), serve as a signal peptide directing secretion. N-linked (GlcNAc...) asparagine glycosylation is found at Asn-55 and Asn-101. Cys-157 and Cys-171 are oxidised to a cystine. A run of 3 helical transmembrane segments spans residues 241–261 (LFQS…GFFF), 265–287 (SVSA…FGNV), and 302–322 (VWMI…AIVC). Asn-418 is a glycosylation site (N-linked (GlcNAc...) asparagine). The helical transmembrane segment at 465 to 485 (MIMFPLSFLIFNVVYWSIYFM) threads the bilayer.

The protein belongs to the ligand-gated ion channel (TC 1.A.9) family.

The protein localises to the postsynaptic cell membrane. It localises to the cell membrane. In Caenorhabditis elegans, this protein is Ligand-gated ion channel 50 (lgc-50).